A 471-amino-acid chain; its full sequence is GTPase Der (471 aa).

EngA-type G domains follow at residues 3–168 (PIVA…PDLS) and 178–353 (VRVA…ANHA). GTP is bound by residues 9–16 (GRPNVGKS), 56–60 (DTGGI), 120–123 (NKVE), 184–191 (GRPNVGKS), 231–235 (DTAGM), and 296–299 (NKWD). The 85-residue stretch at 354 to 438 (RRISTRELND…PINLYFRTRE (85 aa)) folds into the KH-like domain.

The protein belongs to the TRAFAC class TrmE-Era-EngA-EngB-Septin-like GTPase superfamily. EngA (Der) GTPase family. In terms of assembly, associates with the 50S ribosomal subunit.

GTPase that plays an essential role in the late steps of ribosome biogenesis. The chain is GTPase Der from Symbiobacterium thermophilum (strain DSM 24528 / JCM 14929 / IAM 14863 / T).